A 279-amino-acid chain; its full sequence is Urease accessory protein UreD (279 aa).

Belongs to the UreD family. UreD, UreF and UreG form a complex that acts as a GTP-hydrolysis-dependent molecular chaperone, activating the urease apoprotein by helping to assemble the nickel containing metallocenter of UreC. The UreE protein probably delivers the nickel.

The protein localises to the cytoplasm. Its function is as follows. Required for maturation of urease via the functional incorporation of the urease nickel metallocenter. The polypeptide is Urease accessory protein UreD (Rhodopseudomonas palustris (strain HaA2)).